The chain runs to 179 residues: Large ribosomal subunit protein uL5 (179 aa).

The protein belongs to the universal ribosomal protein uL5 family. In terms of assembly, part of the 50S ribosomal subunit; part of the 5S rRNA/L5/L18/L25 subcomplex. Contacts the 5S rRNA and the P site tRNA. Forms a bridge to the 30S subunit in the 70S ribosome.

Functionally, this is one of the proteins that bind and probably mediate the attachment of the 5S RNA into the large ribosomal subunit, where it forms part of the central protuberance. In the 70S ribosome it contacts protein S13 of the 30S subunit (bridge B1b), connecting the 2 subunits; this bridge is implicated in subunit movement. Contacts the P site tRNA; the 5S rRNA and some of its associated proteins might help stabilize positioning of ribosome-bound tRNAs. The polypeptide is Large ribosomal subunit protein uL5 (Variovorax paradoxus (strain S110)).